Here is a 311-residue protein sequence, read N- to C-terminus: MKKKIGLLVMAYGTPYKEEDIERYYTHIRRGRKPSPEMLEDLTERYRAIGGISPLATITLEQAKKLEKRLNEVQDEVEYHMYLGLKHIEPFIEDAVKEMHNDGIQDAIALVLAPHYSTFSVKSYVGRAQEEAEKLGNLTIHGIDSWYKEPKFIQYWVDAVKGIYNGMSDAEREKAVLIVSAHSLPEKIIAMGDPYPDQLNETADYIARGAEVANYAVGWQSAGNTPDPWIGPDVQDLTRELNEKYGYTSFVYAPVGFVAEHLEVLYDNDFECKVVTDEIGAKYYRPEMPNASDAFIDSLTDVVVKKKESVM.

Fe-coproporphyrin III contacts are provided by residues Tyr12, Arg29, 45 to 46 (RY), Ser53, and Tyr124. Residues His182 and Glu263 each coordinate Fe(2+).

This sequence belongs to the ferrochelatase family.

The protein localises to the cytoplasm. The catalysed reaction is Fe-coproporphyrin III + 2 H(+) = coproporphyrin III + Fe(2+). Its pathway is porphyrin-containing compound metabolism; protoheme biosynthesis. In terms of biological role, involved in coproporphyrin-dependent heme b biosynthesis. Catalyzes the insertion of ferrous iron into coproporphyrin III to form Fe-coproporphyrin III. This is Coproporphyrin III ferrochelatase 1 from Bacillus cereus (strain ZK / E33L).